Consider the following 339-residue polypeptide: Phenylalanine--tRNA ligase alpha subunit (339 aa).

A Mg(2+)-binding site is contributed by Glu262.

The protein belongs to the class-II aminoacyl-tRNA synthetase family. Phe-tRNA synthetase alpha subunit type 1 subfamily. As to quaternary structure, tetramer of two alpha and two beta subunits. The cofactor is Mg(2+).

It is found in the cytoplasm. The catalysed reaction is tRNA(Phe) + L-phenylalanine + ATP = L-phenylalanyl-tRNA(Phe) + AMP + diphosphate + H(+). The polypeptide is Phenylalanine--tRNA ligase alpha subunit (Neisseria gonorrhoeae (strain ATCC 700825 / FA 1090)).